The sequence spans 336 residues: NmrA-like family domain-containing oxidoreductase FrzB (336 aa).

K135 contacts NADP(+).

It belongs to the NmrA-type oxidoreductase family.

The catalysed reaction is 4-{[(2S,5S)-5-[(4-hydroxyphenyl)methyl]-2,5-dihydropyrazin-2-yl]methyl}phenol + 2 NADPH + 2 H(+) = (S,S)-2,5-di-(p-hydroxybenzyl)piperazine + 2 NADP(+). It participates in secondary metabolite biosynthesis. Its function is as follows. NmrA-like family domain-containing oxidoreductase; part of the gene cluster that mediates the biosynthesis of the alkaloid (-)-FR901483, a potent immunosuppressant that shows efficacy in animal models and a probable inhibitor of purine nucleotide biosynthesis by targeting phosphoribosylpyrophosphate amidotransferase (PPAT). Within the pathway, FrzB catalyzes the reduction of 4-{[(2S,5S)-5-[(4-hydroxyphenyl)methyl]-2,5-dihydropyrazin-2-yl]methyl}phenol to produce the (S,S)-dityrosyl-piperazine intermediate. The biosynthesis of (-)-FR901483 starts with the condensation of two L-tyrosines to yield (S,S)-dityrosyl-piperazine. This process occurs in 3 steps with the non-canonical nonribosomal peptide synthetase FrzA catalyzing the reduction of L-tyrosine into L-tyrosinal, the spontaneous condensation of 2 L-tyrosinal units, and the subsequent reduction by the NmrA-like family domain-containing oxidoreductase FrzB. The cytochrome P450 monooxygenase FrzC then performs coupling between N10 and C1' to morph the piperazine into a 1,4-diazabicyclo[3.2.1]octane spiro-fused to a 2,5-cyclohexadienone. The dienone portion is further reduced to cyclohexanone by the flavin-dependent reductase FrzD. The methyltranserases (MTs) FrzE and FrzF are then involved in the methylation at the C10' amine and the C4 phenolic oxygen, respectively. The order of the two MTs appear to be interchangeable. Cleavage of the C9-N10' bond by the dioxygenase FrzG then leads to formation of a conjugated iminium. In addition to the oxidation of C9, an additional dehydrogenation between C7 and C8 can occur to give a likely shunt product. The next biosynthetic step is the intramolecular aldol condensation catalyzed by the newly identified aldolase FrzH to yield an aza-tricyclic product with the formation of a C9-C3' bond. The short-chain dehydrogenase/reductase FrzI then produces dephospho-(-)-FR901483 that is phosphorylated at C4'-OH into (-)-FR901483 by the phosphotransferase FrzJ. The polypeptide is NmrA-like family domain-containing oxidoreductase FrzB (Cladobotryum sp).